We begin with the raw amino-acid sequence, 123 residues long: Alpha-lactalbumin A (123 aa).

Positions 1–123 (KQFTKCELSQ…KLEQWLCEEL (123 aa)) constitute a C-type lysozyme domain. 4 disulfides stabilise this stretch: cysteine 6/cysteine 120, cysteine 28/cysteine 111, cysteine 61/cysteine 77, and cysteine 73/cysteine 91. Ca(2+)-binding residues include lysine 79, aspartate 82, aspartate 84, aspartate 87, and aspartate 88.

Belongs to the glycosyl hydrolase 22 family. Lactose synthase (LS) is a heterodimer of a catalytic component, beta1,4-galactosyltransferase (beta4Gal-T1) and a regulatory component, alpha-lactalbumin (LA). In terms of tissue distribution, mammary gland specific. Secreted in milk.

The protein localises to the secreted. In terms of biological role, regulatory subunit of lactose synthase, changes the substrate specificity of galactosyltransferase in the mammary gland making glucose a good acceptor substrate for this enzyme. This enables LS to synthesize lactose, the major carbohydrate component of milk. In other tissues, galactosyltransferase transfers galactose onto the N-acetylglucosamine of the oligosaccharide chains in glycoproteins. The polypeptide is Alpha-lactalbumin A (Equus caballus (Horse)).